Here is a 242-residue protein sequence, read N- to C-terminus: DnaJ homolog subfamily B member 3 (242 aa).

The J domain occupies 1 to 69; sequence MVDYYEVLGV…RKREVYDRCG (69 aa).

As to expression, testis specific. Expression is confined to the germline without any contribution of the somatic components.

Its function is as follows. May operate as a co-chaperone of the male germ cell- and haploid stage-specific Hsp70 proteins. The chain is DnaJ homolog subfamily B member 3 (Dnajb3) from Mus musculus (Mouse).